The chain runs to 182 residues: Peptidoglycan L,D-endopeptidase MepK (182 aa).

Positions M1–A30 form a signal peptide, tat-type signal. Residues H133, D140, and H173 each coordinate Zn(2+).

Belongs to the peptidase M15 family. Zn(2+) is required as a cofactor. In terms of processing, predicted to be exported by the Tat system. The position of the signal peptide cleavage has not been experimentally proven.

It participates in cell wall biogenesis; cell wall polysaccharide biosynthesis. Functionally, l,D-endopeptidase that cleaves meso-diaminopimelic acid (mDAP)-mDAP cross-links in peptidoglycan. It works in conjunction with other elongation-specific D,D-endopeptidases to make space for efficient incorporation of nascent peptidoglycan strands into the sacculus and thus enable cell wall expansion. This is Peptidoglycan L,D-endopeptidase MepK from Escherichia coli O157:H7.